Reading from the N-terminus, the 297-residue chain is Internalin C (297 aa).

The first 34 residues, 1 to 34 (MLKKNNWLQNAVIAMLVLIVGLCINMGSGTKVQA), serve as a signal peptide directing secretion. LRR repeat units lie at residues 74–96 (LSGV…MQFF), 97–120 (TNLK…DLTK), 122–139 (EELS…GIPS), 140–161 (ACLS…LIHL), 162–184 (KNLE…GFLS), and 186–207 (LEVL…RLKK).

The protein belongs to the internalin family. In terms of assembly, interacts in vitro with human intestinal mucin-2 (MUC2) but not with mucin-1; binding is slightly better at pH 5.5, (the pH of the intestine) than at pH 7.4. Interacts with the SH3 6 domain of human DNMBP (Tuba). Interacts with I-kappa-B kinase alpha (IKKA, CHUK).

It localises to the secreted. The protein resides in the host cytoplasm. A virulence enhancer that has at least 2 dissociable functions in infection; it impairs translocation of host transcription factor NF-kappa-B to the nucleus and antagonizes the function of the Tuba dynamin-binding protein, promoting bacterial spreading. Perturbs the morphology of host cell junctions by impairing host DNMBP (Tuba) and WASL interaction, altering cortical tension at the cell junctions and allowing bacteria to more efficiently form bacteria-filled cell protrusions which promote bacterial spreading within infected host tissue. Down-regulates the host inflammation response usually induced by Listeria infection. Interacts with host I-kappa-B kinase alpha (IKKA, CHUK), which prevents IKKA from phosphorylating NF-kappa-B inhibitor alpha (IKBA, NFKBIA) and thus delays degradation of phospho-IKBA. Translocation of host transcription factor p65 (a subunit of NF-kappa-B, RELA) into the nucleus is impaired, which prevents activation of NF-KB-regulated genes. Recognized by serum from healthy humans exposed to L.monocytogenes as well from patients who have recovered from listeriosis. The protein is Internalin C of Listeria monocytogenes serotype 1/2a (strain EGD / Mackaness).